The sequence spans 213 residues: Orotate phosphoribosyltransferase (213 aa).

Lysine 26 is a binding site for 5-phospho-alpha-D-ribose 1-diphosphate. 34-35 (FF) lines the orotate pocket. 5-phospho-alpha-D-ribose 1-diphosphate contacts are provided by residues 72–73 (YK), arginine 99, lysine 100, lysine 103, histidine 105, and 124–132 (DDVITAGTA). 2 residues coordinate orotate: threonine 128 and arginine 156.

The protein belongs to the purine/pyrimidine phosphoribosyltransferase family. PyrE subfamily. In terms of assembly, homodimer. It depends on Mg(2+) as a cofactor.

It catalyses the reaction orotidine 5'-phosphate + diphosphate = orotate + 5-phospho-alpha-D-ribose 1-diphosphate. It participates in pyrimidine metabolism; UMP biosynthesis via de novo pathway; UMP from orotate: step 1/2. In terms of biological role, catalyzes the transfer of a ribosyl phosphate group from 5-phosphoribose 1-diphosphate to orotate, leading to the formation of orotidine monophosphate (OMP). The polypeptide is Orotate phosphoribosyltransferase (Haemophilus influenzae (strain ATCC 51907 / DSM 11121 / KW20 / Rd)).